A 339-amino-acid polypeptide reads, in one-letter code: Glycerol-3-phosphate dehydrogenase [NAD(P)+] (339 aa).

4 residues coordinate NADPH: Ser15, Trp16, His36, and Lys110. The sn-glycerol 3-phosphate site is built by Lys110, Gly144, and Ser146. NADPH is bound at residue Ala148. Residues Lys199, Asp252, Ser262, Arg263, and Asn264 each coordinate sn-glycerol 3-phosphate. Lys199 acts as the Proton acceptor in catalysis. NADPH is bound at residue Arg263. Residues Val287 and Glu289 each contribute to the NADPH site.

Belongs to the NAD-dependent glycerol-3-phosphate dehydrogenase family.

It localises to the cytoplasm. The catalysed reaction is sn-glycerol 3-phosphate + NAD(+) = dihydroxyacetone phosphate + NADH + H(+). The enzyme catalyses sn-glycerol 3-phosphate + NADP(+) = dihydroxyacetone phosphate + NADPH + H(+). It functions in the pathway membrane lipid metabolism; glycerophospholipid metabolism. Its function is as follows. Catalyzes the reduction of the glycolytic intermediate dihydroxyacetone phosphate (DHAP) to sn-glycerol 3-phosphate (G3P), the key precursor for phospholipid synthesis. In Desulfotalea psychrophila (strain LSv54 / DSM 12343), this protein is Glycerol-3-phosphate dehydrogenase [NAD(P)+].